Reading from the N-terminus, the 448-residue chain is Tubulin beta-2 chain (448 aa).

GTP is bound by residues glutamine 11, glutamate 69, serine 138, glycine 142, threonine 143, glycine 144, asparagine 204, and asparagine 226. Glutamate 69 is a Mg(2+) binding site. The interval 421–448 is disordered; it reads EYQQYQDATADEDGEYEDELDGQEEEDM. Acidic residues predominate over residues 429 to 448; it reads TADEDGEYEDELDGQEEEDM.

Belongs to the tubulin family. As to quaternary structure, dimer of alpha and beta chains. A typical microtubule is a hollow water-filled tube with an outer diameter of 25 nm and an inner diameter of 15 nM. Alpha-beta heterodimers associate head-to-tail to form protofilaments running lengthwise along the microtubule wall with the beta-tubulin subunit facing the microtubule plus end conferring a structural polarity. Microtubules usually have 13 protofilaments but different protofilament numbers can be found in some organisms and specialized cells. Requires Mg(2+) as cofactor.

The protein resides in the cytoplasm. Its subcellular location is the cytoskeleton. Functionally, tubulin is the major constituent of microtubules, a cylinder consisting of laterally associated linear protofilaments composed of alpha- and beta-tubulin heterodimers. Microtubules grow by the addition of GTP-tubulin dimers to the microtubule end, where a stabilizing cap forms. Below the cap, tubulin dimers are in GDP-bound state, owing to GTPase activity of alpha-tubulin. This chain is Tubulin beta-2 chain (TUBB2), found in Eleusine indica (Goosegrass).